The sequence spans 226 residues: Fibrillarin-like rRNA/tRNA 2'-O-methyltransferase (226 aa).

Residues 85 to 86 (TT), 104 to 105 (EF), 129 to 130 (DA), and 149 to 152 (DVAQ) contribute to the S-adenosyl-L-methionine site.

Belongs to the methyltransferase superfamily. Fibrillarin family. Interacts with nop5. Component of box C/D small ribonucleoprotein (sRNP) particles that contain rpl7ae, FlpA and nop5, plus a guide RNA.

In terms of biological role, involved in pre-rRNA and tRNA processing. Utilizes the methyl donor S-adenosyl-L-methionine to catalyze the site-specific 2'-hydroxyl methylation of ribose moieties in rRNA and tRNA. Site specificity is provided by a guide RNA that base pairs with the substrate. Methylation occurs at a characteristic distance from the sequence involved in base pairing with the guide RNA. The polypeptide is Fibrillarin-like rRNA/tRNA 2'-O-methyltransferase (Thermococcus sibiricus (strain DSM 12597 / MM 739)).